Consider the following 379-residue polypeptide: Anthranilate O-methyltransferase 3 (379 aa).

The segment covering 1–10 has biased composition (basic and acidic residues); sequence MPMRIERDLH. The segment at 1 to 21 is disordered; that stretch reads MPMRIERDLHMATGNGETSYT. Y20 is a binding site for S-adenosyl-L-homocysteine. Q27 provides a ligand contact to anthranilate. The S-adenosyl-L-homocysteine site is built by C61, N66, D100, L101, S143, and F144. The anthranilate site is built by H164 and W165. The Mg(2+) site is built by E265 and F267.

The protein belongs to the methyltransferase superfamily. Type-7 methyltransferase family. SABATH subfamily.

The catalysed reaction is anthranilate + S-adenosyl-L-methionine = O-methyl anthranilate + S-adenosyl-L-homocysteine. It carries out the reaction benzoate + S-adenosyl-L-methionine = methyl benzoate + S-adenosyl-L-homocysteine. The enzyme catalyses salicylate + S-adenosyl-L-methionine = methyl salicylate + S-adenosyl-L-homocysteine. Methyltransferase involved in the biosynthesis of methyl anthranilate in response to stresses. Utilizes anthranilic acid as substrate. Produces exclusively the O-methyl ester. Can also use benzoic acid as substrate. Low activity with salicylic acid. This Zea mays (Maize) protein is Anthranilate O-methyltransferase 3 (AAMT3).